A 783-amino-acid polypeptide reads, in one-letter code: Probable galactinol--sucrose galactosyltransferase 5 (783 aa).

2 positions are modified to phosphoserine: Ser-9 and Ser-11.

Belongs to the glycosyl hydrolases 36 family.

It catalyses the reaction alpha-D-galactosyl-(1-&gt;3)-1D-myo-inositol + sucrose = raffinose + myo-inositol. In terms of biological role, transglycosidase operating by a ping-pong reaction mechanism. Involved in the synthesis of raffinose, a major soluble carbohydrate in seeds, roots and tubers. The polypeptide is Probable galactinol--sucrose galactosyltransferase 5 (RFS5) (Arabidopsis thaliana (Mouse-ear cress)).